A 98-amino-acid polypeptide reads, in one-letter code: Phosphoribosyl-ATP pyrophosphatase (98 aa).

The protein belongs to the PRA-PH family.

The protein localises to the cytoplasm. It carries out the reaction 1-(5-phospho-beta-D-ribosyl)-ATP + H2O = 1-(5-phospho-beta-D-ribosyl)-5'-AMP + diphosphate + H(+). It participates in amino-acid biosynthesis; L-histidine biosynthesis; L-histidine from 5-phospho-alpha-D-ribose 1-diphosphate: step 2/9. The sequence is that of Phosphoribosyl-ATP pyrophosphatase from Pelotomaculum thermopropionicum (strain DSM 13744 / JCM 10971 / SI).